We begin with the raw amino-acid sequence, 158 residues long: NAD(P)H-quinone oxidoreductase subunit J, chloroplastic (158 aa).

Belongs to the complex I 30 kDa subunit family. NDH is composed of at least 16 different subunits, 5 of which are encoded in the nucleus.

It localises to the plastid. The protein resides in the chloroplast thylakoid membrane. It carries out the reaction a plastoquinone + NADH + (n+1) H(+)(in) = a plastoquinol + NAD(+) + n H(+)(out). The catalysed reaction is a plastoquinone + NADPH + (n+1) H(+)(in) = a plastoquinol + NADP(+) + n H(+)(out). Functionally, NDH shuttles electrons from NAD(P)H:plastoquinone, via FMN and iron-sulfur (Fe-S) centers, to quinones in the photosynthetic chain and possibly in a chloroplast respiratory chain. The immediate electron acceptor for the enzyme in this species is believed to be plastoquinone. Couples the redox reaction to proton translocation, and thus conserves the redox energy in a proton gradient. This Buxus microphylla (Littleleaf boxwood) protein is NAD(P)H-quinone oxidoreductase subunit J, chloroplastic.